The chain runs to 70 residues: Sec-independent protein translocase protein TatA (70 aa).

A helical transmembrane segment spans residues 1-21; it reads MGSFSIWHWLIVLVVVALLFG. The segment at 45–70 is disordered; sequence KGESEQAEDETAKPLPKERDKDSARG.

It belongs to the TatA/E family. The Tat system comprises two distinct complexes: a TatABC complex, containing multiple copies of TatA, TatB and TatC subunits, and a separate TatA complex, containing only TatA subunits. Substrates initially bind to the TatABC complex, which probably triggers association of the separate TatA complex to form the active translocon.

The protein localises to the cell inner membrane. Its function is as follows. Part of the twin-arginine translocation (Tat) system that transports large folded proteins containing a characteristic twin-arginine motif in their signal peptide across membranes. TatA could form the protein-conducting channel of the Tat system. The polypeptide is Sec-independent protein translocase protein TatA (Phenylobacterium zucineum (strain HLK1)).